Consider the following 1349-residue polypeptide: ABC multidrug transporter G (1349 aa).

Residues Arg51–Lys299 enclose the ABC transporter 1 domain. N-linked (GlcNAc...) asparagine glycosylation occurs at Asn144. A run of 4 helical transmembrane segments spans residues Leu407–Phe427, Ser436–Met456, Ile492–Leu512, and Trp523–Leu543. N-linked (GlcNAc...) asparagine glycosylation is present at Asn549. 2 helical membrane-spanning segments follow: residues Ala550 to Pro570 and Trp580 to Val600. A glycan (N-linked (GlcNAc...) asparagine) is linked at Asn649. A helical membrane pass occupies residues Phe659–Leu679. The ABC transporter 2 domain maps to Phe721–Ala963. Gly757 to Thr764 lines the ATP pocket. Asn994 carries N-linked (GlcNAc...) asparagine glycosylation. 6 helical membrane-spanning segments follow: residues Val1056–Gly1076, Phe1085–Phe1105, Ile1121–Ala1143, Met1166–Ala1186, Phe1193–Val1213, and Trp1226–Trp1246. Residue Asn1287 is glycosylated (N-linked (GlcNAc...) asparagine). A helical transmembrane segment spans residues Thr1318 to Leu1338.

The protein belongs to the ABC transporter superfamily. ABCG family. PDR (TC 3.A.1.205) subfamily.

The protein resides in the cell membrane. ABC efflux transporter that seems not to be able to transport azoles, nor rhodamine 6G (R-6G), a known substrate for many ABC transporters. The chain is ABC multidrug transporter G from Aspergillus fumigatus (strain ATCC MYA-4609 / CBS 101355 / FGSC A1100 / Af293) (Neosartorya fumigata).